The sequence spans 277 residues: Ribosomal protein L11 methyltransferase (277 aa).

The S-adenosyl-L-methionine site is built by threonine 130, glycine 151, aspartate 172, and asparagine 213.

This sequence belongs to the methyltransferase superfamily. PrmA family.

The protein localises to the cytoplasm. It carries out the reaction L-lysyl-[protein] + 3 S-adenosyl-L-methionine = N(6),N(6),N(6)-trimethyl-L-lysyl-[protein] + 3 S-adenosyl-L-homocysteine + 3 H(+). Functionally, methylates ribosomal protein L11. The polypeptide is Ribosomal protein L11 methyltransferase (Campylobacter concisus (strain 13826)).